Reading from the N-terminus, the 423-residue chain is Glutamate-1-semialdehyde 2,1-aminomutase (423 aa).

Lys-258 carries the N6-(pyridoxal phosphate)lysine modification.

Belongs to the class-III pyridoxal-phosphate-dependent aminotransferase family. HemL subfamily. Requires pyridoxal 5'-phosphate as cofactor.

It localises to the cytoplasm. It carries out the reaction (S)-4-amino-5-oxopentanoate = 5-aminolevulinate. It functions in the pathway porphyrin-containing compound metabolism; protoporphyrin-IX biosynthesis; 5-aminolevulinate from L-glutamyl-tRNA(Glu): step 2/2. In Pyrobaculum arsenaticum (strain DSM 13514 / JCM 11321 / PZ6), this protein is Glutamate-1-semialdehyde 2,1-aminomutase.